A 175-amino-acid chain; its full sequence is Ribosome maturation factor RimM (175 aa).

The PRC barrel domain maps to 99–172 (SIEFTWEHFI…KLTMIIPDGL (74 aa)).

The protein belongs to the RimM family. As to quaternary structure, binds ribosomal protein uS19.

The protein resides in the cytoplasm. Its function is as follows. An accessory protein needed during the final step in the assembly of 30S ribosomal subunit, possibly for assembly of the head region. Essential for efficient processing of 16S rRNA. May be needed both before and after RbfA during the maturation of 16S rRNA. It has affinity for free ribosomal 30S subunits but not for 70S ribosomes. This chain is Ribosome maturation factor RimM, found in Porphyromonas gingivalis (strain ATCC BAA-308 / W83).